Consider the following 302-residue polypeptide: Sulfate adenylyltransferase subunit 2 (302 aa).

Positions 280 to 302 (RQGRLIDSDQSASMEQKKRQGYF) are disordered.

Belongs to the PAPS reductase family. CysD subfamily. As to quaternary structure, heterodimer composed of CysD, the smaller subunit, and CysN.

It catalyses the reaction sulfate + ATP + H(+) = adenosine 5'-phosphosulfate + diphosphate. Its pathway is sulfur metabolism; hydrogen sulfide biosynthesis; sulfite from sulfate: step 1/3. With CysN forms the ATP sulfurylase (ATPS) that catalyzes the adenylation of sulfate producing adenosine 5'-phosphosulfate (APS) and diphosphate, the first enzymatic step in sulfur assimilation pathway. APS synthesis involves the formation of a high-energy phosphoric-sulfuric acid anhydride bond driven by GTP hydrolysis by CysN coupled to ATP hydrolysis by CysD. The protein is Sulfate adenylyltransferase subunit 2 of Shewanella frigidimarina (strain NCIMB 400).